A 421-amino-acid polypeptide reads, in one-letter code: Putative nickel insertion protein (421 aa).

It belongs to the LarC family.

The sequence is that of Putative nickel insertion protein from Gloeobacter violaceus (strain ATCC 29082 / PCC 7421).